Consider the following 415-residue polypeptide: Protein ROH1A (415 aa).

The tract at residues 184–219 is disordered; that stretch reads VSGGGGGGGGGNKTTERSWSFGRRSGGSSAASKGGA. Positions 185–195 are enriched in gly residues; that stretch reads SGGGGGGGGGN. The span at 200 to 219 shows a compositional bias: low complexity; sequence RSWSFGRRSGGSSAASKGGA. Residues 263-283 form a helical membrane-spanning segment; the sequence is MFIMSTVMVFVMWVLTAAVPC.

It belongs to the ROH1 family. Interacts with EXO70A1 and EXO70C1. Binds to EXO70C2. Mainly expressed in cells expanding in a polar manner such as pollen and root hairs.

The protein localises to the membrane. The protein resides in the cytoplasm. It localises to the cytosol. Required for seed coat mucilage deposition. The sequence is that of Protein ROH1A from Arabidopsis thaliana (Mouse-ear cress).